The following is a 388-amino-acid chain: 8-amino-7-oxononanoate synthase (388 aa).

Arg-23 contributes to the substrate binding site. A pyridoxal 5'-phosphate-binding site is contributed by 110-111; sequence GF. A substrate-binding site is contributed by His-135. Residues Ser-181, His-209, and Thr-235 each coordinate pyridoxal 5'-phosphate. Lys-238 is modified (N6-(pyridoxal phosphate)lysine). Residue Thr-352 coordinates substrate.

Belongs to the class-II pyridoxal-phosphate-dependent aminotransferase family. BioF subfamily. Homodimer. It depends on pyridoxal 5'-phosphate as a cofactor.

The enzyme catalyses 6-carboxyhexanoyl-[ACP] + L-alanine + H(+) = (8S)-8-amino-7-oxononanoate + holo-[ACP] + CO2. It functions in the pathway cofactor biosynthesis; biotin biosynthesis. Functionally, catalyzes the decarboxylative condensation of pimeloyl-[acyl-carrier protein] and L-alanine to produce 8-amino-7-oxononanoate (AON), [acyl-carrier protein], and carbon dioxide. The sequence is that of 8-amino-7-oxononanoate synthase from Sodalis glossinidius (strain morsitans).